Consider the following 206-residue polypeptide: CASP-like protein 2C1 (206 aa).

At 1–31 the chain is on the cytoplasmic side; that stretch reads MSVLGVGPRTVTPHLRKGMMESSSGISLARA. A helical transmembrane segment spans residues 32–52; the sequence is EAFLRLFAILVLVLTACLLGF. Residues 53 to 71 lie on the Extracellular side of the membrane; it reads DTQTKLLFSTIKKTATFRD. The helical transmembrane segment at 72 to 92 threads the bilayer; it reads LGALQVVVYVDSVAAGYNLLQ. Topologically, residues 93–111 are cytoplasmic; sequence LGRGFISAKLKGKLINVSY. The helical transmembrane segment at 112-132 threads the bilayer; it reads VTLPWVCFLLDQAAVYTVFSA. Residues 133–161 are Extracellular-facing; the sequence is NTAALQASIIAVTGESSLQWMKVCNRYTR. The helical transmembrane segment at 162–182 threads the bilayer; it reads FCIQVGGALLSGYLASLLMVL. At 183–206 the chain is on the cytoplasmic side; sequence LSSLSAFSLFRLYSPKQFHLLKPT.

Belongs to the Casparian strip membrane proteins (CASP) family. In terms of assembly, homodimer and heterodimers.

The protein localises to the cell membrane. The chain is CASP-like protein 2C1 from Vitis vinifera (Grape).